The following is a 244-amino-acid chain: 7-cyano-7-deazaguanine synthase (244 aa).

Residue 14–24 (FSGGQDSATCV) participates in ATP binding. Positions 202, 217, 220, and 223 each coordinate Zn(2+).

Belongs to the QueC family. Zn(2+) serves as cofactor.

It catalyses the reaction 7-carboxy-7-deazaguanine + NH4(+) + ATP = 7-cyano-7-deazaguanine + ADP + phosphate + H2O + H(+). The protein operates within purine metabolism; 7-cyano-7-deazaguanine biosynthesis. Catalyzes the ATP-dependent conversion of 7-carboxy-7-deazaguanine (CDG) to 7-cyano-7-deazaguanine (preQ(0)). The sequence is that of 7-cyano-7-deazaguanine synthase from Burkholderia mallei (strain NCTC 10229).